A 412-amino-acid polypeptide reads, in one-letter code: Protein png-1 (412 aa).

Zn(2+)-binding residues include Cys-150, Cys-153, Cys-182, and Cys-185. Positions 363-412 (AAAARGGRSSPDNKSGANMMGSPATGDIKRPIPEDAPVPDVPSLWPTYGP) are disordered.

The protein belongs to the transglutaminase-like superfamily. PNGase family.

In Neurospora crassa (strain ATCC 24698 / 74-OR23-1A / CBS 708.71 / DSM 1257 / FGSC 987), this protein is Protein png-1 (un-7).